The primary structure comprises 342 residues: Glucokinase (342 aa).

18–23 contributes to the ATP binding site; that stretch reads GDIGGT.

This sequence belongs to the bacterial glucokinase family.

Its subcellular location is the cytoplasm. It catalyses the reaction D-glucose + ATP = D-glucose 6-phosphate + ADP + H(+). This chain is Glucokinase, found in Chelativorans sp. (strain BNC1).